The following is a 251-amino-acid chain: Cell division protein ZapD (251 aa).

This sequence belongs to the ZapD family. As to quaternary structure, interacts with FtsZ.

Its subcellular location is the cytoplasm. Functionally, cell division factor that enhances FtsZ-ring assembly. Directly interacts with FtsZ and promotes bundling of FtsZ protofilaments, with a reduction in FtsZ GTPase activity. The sequence is that of Cell division protein ZapD from Burkholderia mallei (strain NCTC 10247).